We begin with the raw amino-acid sequence, 979 residues long: UPF0182 protein Mb0065 (979 aa).

7 consecutive transmembrane segments (helical) span residues 19 to 41, 63 to 85, 114 to 136, 174 to 196, 208 to 230, 261 to 280, and 285 to 307; these read LVTAGMGMLALLLFGPRLVDIYV, LAIVAAVALVVAGIVLAALLLAY, LFGWGIAVTLGVVCGLIASFDWV, WLFVAVVLAFLASLLTHYLFGGL, AARVQLAVFAGAVVLLKAVAYWL, LVLVAIAVLCAVSFFTAIFL, and IPAMAAALLVLSAILVGGLWPLL. A disordered region spans residues 898 to 948; the sequence is GTGRVATAPGGDAASAPPPGAGGPAPPQAVPPPRTTQPPAAPPRGPDVPPA. Positions 902–912 are enriched in low complexity; it reads VATAPGGDAAS. Residues 913–946 show a composition bias toward pro residues; it reads APPPGAGGPAPPQAVPPPRTTQPPAAPPRGPDVP.

Belongs to the UPF0182 family.

Its subcellular location is the cell membrane. This is UPF0182 protein Mb0065 from Mycobacterium bovis (strain ATCC BAA-935 / AF2122/97).